The sequence spans 574 residues: Proline--tRNA ligase (574 aa).

Belongs to the class-II aminoacyl-tRNA synthetase family. ProS type 1 subfamily. As to quaternary structure, homodimer.

The protein resides in the cytoplasm. It carries out the reaction tRNA(Pro) + L-proline + ATP = L-prolyl-tRNA(Pro) + AMP + diphosphate. Functionally, catalyzes the attachment of proline to tRNA(Pro) in a two-step reaction: proline is first activated by ATP to form Pro-AMP and then transferred to the acceptor end of tRNA(Pro). As ProRS can inadvertently accommodate and process non-cognate amino acids such as alanine and cysteine, to avoid such errors it has two additional distinct editing activities against alanine. One activity is designated as 'pretransfer' editing and involves the tRNA(Pro)-independent hydrolysis of activated Ala-AMP. The other activity is designated 'posttransfer' editing and involves deacylation of mischarged Ala-tRNA(Pro). The misacylated Cys-tRNA(Pro) is not edited by ProRS. In Thioalkalivibrio sulfidiphilus (strain HL-EbGR7), this protein is Proline--tRNA ligase.